The chain runs to 427 residues: Tyrosine--tRNA ligase (427 aa).

Residue Tyr-33 participates in L-tyrosine binding. The 'HIGH' region motif lies at Pro-38–Asn-47. 2 residues coordinate L-tyrosine: Tyr-168 and Gln-172. The 'KMSKS' region motif lies at Lys-228–Ser-232. Lys-231 is an ATP binding site. One can recognise an S4 RNA-binding domain in the interval Leu-361–Asn-427.

It belongs to the class-I aminoacyl-tRNA synthetase family. TyrS type 1 subfamily. In terms of assembly, homodimer.

It is found in the cytoplasm. The catalysed reaction is tRNA(Tyr) + L-tyrosine + ATP = L-tyrosyl-tRNA(Tyr) + AMP + diphosphate + H(+). Functionally, catalyzes the attachment of tyrosine to tRNA(Tyr) in a two-step reaction: tyrosine is first activated by ATP to form Tyr-AMP and then transferred to the acceptor end of tRNA(Tyr). The protein is Tyrosine--tRNA ligase of Cytophaga hutchinsonii (strain ATCC 33406 / DSM 1761 / CIP 103989 / NBRC 15051 / NCIMB 9469 / D465).